The primary structure comprises 625 residues: RalA-binding protein 1 (625 aa).

Basic and acidic residues-rich tracts occupy residues 1–11 (MDFDSPEEKEF) and 20–60 (ADAK…KDRG). A disordered region spans residues 1 to 172 (MDFDSPEEKE…SKQLSQQQDD (172 aa)). Serine 68 and serine 69 each carry phosphoserine. Basic and acidic residues predominate over residues 94–157 (KSKEKREKSR…EKDKKADKKD (64 aa)). The region spanning 191–385 (VSLATERSRC…PLTSTSPKLP (195 aa)) is the Rho-GAP domain. The interval 443–500 (QEKTAEEVDNSSSAPPAVASEDTTDSKPAGTPAVSTNNSISQEEPKTDTLTPKDAPND) is disordered. A compositionally biased stretch (polar residues) spans 475–484 (AVSTNNSISQ).

Interacts with CycB and numb.

Participates in receptor endocytosis during interphase, is also involved in mitotic processes when endocytosis is switched off. The polypeptide is RalA-binding protein 1 (Drosophila melanogaster (Fruit fly)).